An 86-amino-acid chain; its full sequence is MFGYRSLLVLLVTLSLCLLLQSSHCSAVRTYGNDLDARARREIISLAARLIKLSMYGPEDDSFVKRNGGTADALYNLPDLEKIGKR.

The first 27 residues, 1 to 27, serve as a signal peptide directing secretion; it reads MFGYRSLLVLLVTLSLCLLLQSSHCSA. Residues 28–64 constitute a propeptide that is removed on maturation; it reads VRTYGNDLDARARREIISLAARLIKLSMYGPEDDSFV. Residue Ile83 is modified to Isoleucine amide.

As to expression, expressed only in cerebral ganglion.

The protein localises to the secreted. May function as a hormone and may play a neuromodulatory role. This is Cerebrin prohormone (CBPH) from Aplysia californica (California sea hare).